A 165-amino-acid polypeptide reads, in one-letter code: Putative pre-16S rRNA nuclease (165 aa).

It belongs to the YqgF nuclease family.

The protein localises to the cytoplasm. Its function is as follows. Could be a nuclease involved in processing of the 5'-end of pre-16S rRNA. The polypeptide is Putative pre-16S rRNA nuclease (Sinorhizobium medicae (strain WSM419) (Ensifer medicae)).